Reading from the N-terminus, the 72-residue chain is MQKLIILLLVAAVLMSTQALFQEKRPMKKIDFLSKGKTDAEKQQKRSCSDDWQYCESPTDCCSWDCDVVCSG.

A signal peptide spans 1 to 19; the sequence is MQKLIILLLVAAVLMSTQA. Positions 20–44 are excised as a propeptide; the sequence is LFQEKRPMKKIDFLSKGKTDAEKQQ. 3 disulfide bridges follow: cysteine 48–cysteine 62, cysteine 55–cysteine 66, and cysteine 61–cysteine 70. A 4-carboxyglutamate modification is found at glutamate 56. 4-hydroxyproline is present on proline 58. Serine 71 carries the post-translational modification Serine amide.

This sequence belongs to the conotoxin O2 superfamily. Post-translationally, brominated at one of the Trp residues. Expressed by the venom duct.

The protein resides in the secreted. The protein is Conotoxin Gla(2)-TxVI/A of Conus textile (Cloth-of-gold cone).